The sequence spans 288 residues: Probable ketoamine kinase SAOUHSC_02908 (288 aa).

86–88 (TYL) serves as a coordination point for ATP. The active-site Proton acceptor is the Asp-191.

Belongs to the fructosamine kinase family.

It catalyses the reaction N(6)-(D-ribulosyl)-L-lysine + ATP = N(6)-(3-O-phospho-D-ribulosyl)-L-lysine + ADP + H(+). It carries out the reaction N(6)-(D-erythrulosyl)-L-lysine + ATP = N(6)-(3-O-phospho-D-erythrulosyl)-L-lysine + ADP + H(+). The catalysed reaction is N(6)-D-ribulosyl-L-lysyl-[protein] + ATP = N(6)-(3-O-phospho-D-ribulosyl)-L-lysyl-[protein] + ADP + H(+). The enzyme catalyses N(6)-(D-erythrulosyl)-L-lysyl-[protein] + ATP = N(6)-(3-O-phospho-D-erythrulosyl)-L-lysyl-[protein] + ADP + H(+). Its function is as follows. Ketoamine kinase that phosphorylates ketoamines, such as erythruloselysine and ribuloselysine, on the third carbon of the sugar moiety to generate ketoamine 3-phosphate. Has higher activity on free lysine (erythruloselysine and ribuloselysine), than on ribuloselysine and erythruloselysine residues on glycated proteins. This is Probable ketoamine kinase SAOUHSC_02908 from Staphylococcus aureus (strain NCTC 8325 / PS 47).